Here is a 299-residue protein sequence, read N- to C-terminus: 33 kDa chaperonin (299 aa).

Intrachain disulfides connect Cys-234–Cys-236 and Cys-268–Cys-271.

The protein belongs to the HSP33 family. Post-translationally, under oxidizing conditions two disulfide bonds are formed involving the reactive cysteines. Under reducing conditions zinc is bound to the reactive cysteines and the protein is inactive.

The protein resides in the cytoplasm. Functionally, redox regulated molecular chaperone. Protects both thermally unfolding and oxidatively damaged proteins from irreversible aggregation. Plays an important role in the bacterial defense system toward oxidative stress. The chain is 33 kDa chaperonin from Pseudomonas putida (strain GB-1).